Consider the following 568-residue polypeptide: SLAIN motif-containing protein 1 (568 aa).

Disordered regions lie at residues 1–22, 59–92, 139–162, 235–256, and 291–403; these read MMAE…SGPV, LLLL…TAAA, GGGP…SPPP, YTSR…STSE, and STSA…LRRS. Positions 21 to 56 form a coiled coil; that stretch reads PVVNAELEVKKLQELVRKLEKQNEQLRSRAASAAAA. Residues 62-74 show a composition bias toward pro residues; that stretch reads LPPPPPAAPPPAG. Low complexity predominate over residues 75–92; the sequence is LQPLGPRSPPAATATAAA. Residues 139 to 149 show a composition bias toward gly residues; sequence GGGPEPGGAGT. Polar residues predominate over residues 235–245; the sequence is YTSRGSPLSPQ. Residue serine 243 is modified to Phosphoserine. 2 stretches are compositionally biased toward low complexity: residues 246–255 and 291–307; these read SSIDSELSTS and STSA…SLSS. Positions 316-329 are enriched in acidic residues; the sequence is QEYDQYSLEDEEEF. Low complexity predominate over residues 366-384; that stretch reads SSQYFPSNNYQQQQYYSPQ. The segment covering 385–395 has biased composition (polar residues); that stretch reads AQTPDQQPNRT. Asymmetric dimethylarginine is present on residues arginine 471 and arginine 543.

Belongs to the SLAIN motif-containing family. As to quaternary structure, interacts with MAPRE1, MAPRE2, MAPRE3 and CKAP5. Interacts with ZDHHC17 (via ANK repeats). Expressed in embryonic stem cells. Expressed in brain.

It is found in the cytoplasm. The protein localises to the cytoskeleton. Microtubule plus-end tracking protein that might be involved in the regulation of cytoplasmic microtubule dynamics, microtubule organization and microtubule elongation. The polypeptide is SLAIN motif-containing protein 1 (SLAIN1) (Homo sapiens (Human)).